A 415-amino-acid polypeptide reads, in one-letter code: Adenosylhomocysteinase (415 aa).

Substrate is bound by residues Thr-53, Asp-124, and Glu-147. NAD(+) is bound at residue 148–150; the sequence is TTT. Substrate is bound by residues Lys-177 and Asp-181. NAD(+) is bound by residues Asn-182, 211 to 216, Glu-234, Asn-269, 290 to 292, and Asn-337; these read GYGWVG and SGH.

Belongs to the adenosylhomocysteinase family. NAD(+) serves as cofactor.

Its subcellular location is the cytoplasm. It catalyses the reaction S-adenosyl-L-homocysteine + H2O = L-homocysteine + adenosine. The protein operates within amino-acid biosynthesis; L-homocysteine biosynthesis; L-homocysteine from S-adenosyl-L-homocysteine: step 1/1. May play a key role in the regulation of the intracellular concentration of adenosylhomocysteine. This Sulfolobus acidocaldarius (strain ATCC 33909 / DSM 639 / JCM 8929 / NBRC 15157 / NCIMB 11770) protein is Adenosylhomocysteinase.